A 1012-amino-acid polypeptide reads, in one-letter code: Tolloid-like protein 2 (1012 aa).

The first 21 residues, 1–21, serve as a signal peptide directing secretion; that stretch reads MPLATTLGTLVLLLLLPLPRG. Residues 22–146 constitute a propeptide that is removed on maturation; that stretch reads AEVTGDHSNV…AKTFSARVRR (125 aa). Positions 83 to 135 are disordered; sequence KPSIDKPGHDTGGLEETSARWPNDTASNASIQAPRKDGKDATTFLPNPGTSNT. Residues 126–135 are compositionally biased toward polar residues; the sequence is FLPNPGTSNT. The Peptidase M12A domain occupies 146–346; the sequence is RATTSRTERI…AQARKLYKCP (201 aa). N-linked (GlcNAc...) asparagine glycosylation is present at asparagine 168. 4 disulfide bridges follow: cysteine 189–cysteine 345, cysteine 209–cysteine 231, cysteine 211–cysteine 212, and cysteine 348–cysteine 374. Histidine 239 contributes to the Zn(2+) binding site. The active site involves glutamate 240. The Zn(2+) site is built by histidine 243 and histidine 249. 2 consecutive CUB domains span residues 348–460 and 461–573; these read CGET…YEAM and CGGD…FFKE. Residues asparagine 358 and asparagine 389 are each glycosylated (N-linked (GlcNAc...) asparagine). 12 disulfide bridges follow: cysteine 401/cysteine 423, cysteine 461/cysteine 487, cysteine 514/cysteine 536, cysteine 577/cysteine 589, cysteine 585/cysteine 598, cysteine 600/cysteine 613, cysteine 617/cysteine 643, cysteine 670/cysteine 692, cysteine 733/cysteine 744, cysteine 740/cysteine 753, cysteine 755/cysteine 768, and cysteine 773/cysteine 799. Positions 573 to 614 constitute an EGF-like 1; calcium-binding domain; the sequence is EVDECSWPDHGGCEQRCVNTLGSYTCACDPGYELAADKKTCE. A CUB 3 domain is found at 617-729; the sequence is CGGFITKLNG…RGFRAHFFSD (113 aa). Asparagine 625 carries N-linked (GlcNAc...) asparagine glycosylation. The EGF-like 2; calcium-binding domain occupies 729–769; it reads DKDECAKDNGGCQQECVNTFGSYLCRCRNGYRLHENGHDCK. 2 CUB domains span residues 773-885 and 886-1002; these read CAYK…HSTE and CGGR…YTST. N-linked (GlcNAc...) asparagine glycosylation is present at asparagine 802. 3 disulfide bridges follow: cysteine 826–cysteine 848, cysteine 886–cysteine 916, and cysteine 943–cysteine 965. Omega-N-methylarginine is present on residues arginine 960 and arginine 963.

The cofactor is Zn(2+).

The protein resides in the secreted. Functionally, protease which specifically processes pro-lysyl oxidase. Required for the embryonic development. Predominant protease, which in the development, influences dorsal-ventral patterning and skeletogenesis. The chain is Tolloid-like protein 2 (Tll2) from Mus musculus (Mouse).